Here is a 344-residue protein sequence, read N- to C-terminus: L-rhamnose-proton symporter (344 aa).

A run of 10 helical transmembrane segments spans residues 4–24 (AITM…CFYA), 38–58 (WSVG…ALLL), 68–88 (FSLS…IGNI), 101–121 (MGIG…TPII), 137–157 (TLLG…AGQL), 175–195 (LVLA…MNAA), 214–234 (LPSY…FCFI), 259–279 (VLLS…YAWG), 290–310 (ISWM…GLVL), and 323–343 (VLSL…IGMA).

This sequence belongs to the L-rhamnose transporter (TC 2.A.7.6) family.

Its subcellular location is the cell inner membrane. It catalyses the reaction L-rhamnopyranose(in) + H(+)(in) = L-rhamnopyranose(out) + H(+)(out). Its function is as follows. Uptake of L-rhamnose across the cytoplasmic membrane with the concomitant transport of protons into the cell (symport system). The protein is L-rhamnose-proton symporter of Shigella flexneri.